The following is a 424-amino-acid chain: Serine hydroxymethyltransferase 2 (424 aa).

(6S)-5,6,7,8-tetrahydrofolate-binding positions include L125 and 129-131 (GHL). At K234 the chain carries N6-(pyridoxal phosphate)lysine. A (6S)-5,6,7,8-tetrahydrofolate-binding site is contributed by E250.

Belongs to the SHMT family. As to quaternary structure, homodimer. Requires pyridoxal 5'-phosphate as cofactor.

It is found in the cytoplasm. The enzyme catalyses (6R)-5,10-methylene-5,6,7,8-tetrahydrofolate + glycine + H2O = (6S)-5,6,7,8-tetrahydrofolate + L-serine. It participates in one-carbon metabolism; tetrahydrofolate interconversion. The protein operates within amino-acid biosynthesis; glycine biosynthesis; glycine from L-serine: step 1/1. Its function is as follows. Catalyzes the reversible interconversion of serine and glycine with tetrahydrofolate (THF) serving as the one-carbon carrier. This reaction serves as the major source of one-carbon groups required for the biosynthesis of purines, thymidylate, methionine, and other important biomolecules. Also exhibits THF-independent aldolase activity toward beta-hydroxyamino acids, producing glycine and aldehydes, via a retro-aldol mechanism. In Ralstonia nicotianae (strain ATCC BAA-1114 / GMI1000) (Ralstonia solanacearum), this protein is Serine hydroxymethyltransferase 2.